The following is a 133-amino-acid chain: Peptide methionine sulfoxide reductase MsrB (133 aa).

One can recognise a MsrB domain in the interval 8-130; the sequence is LDVWRELLSD…NSASLRLKPR (123 aa). Zn(2+) is bound by residues cysteine 47, cysteine 50, cysteine 96, and cysteine 99. Cysteine 119 (nucleophile) is an active-site residue.

This sequence belongs to the MsrB Met sulfoxide reductase family. Zn(2+) serves as cofactor.

It carries out the reaction L-methionyl-[protein] + [thioredoxin]-disulfide + H2O = L-methionyl-(R)-S-oxide-[protein] + [thioredoxin]-dithiol. This is Peptide methionine sulfoxide reductase MsrB from Azotobacter vinelandii (strain DJ / ATCC BAA-1303).